Consider the following 86-residue polypeptide: Cell division topological specificity factor (86 aa).

This sequence belongs to the MinE family.

In terms of biological role, prevents the cell division inhibition by proteins MinC and MinD at internal division sites while permitting inhibition at polar sites. This ensures cell division at the proper site by restricting the formation of a division septum at the midpoint of the long axis of the cell. This is Cell division topological specificity factor from Alteromonas mediterranea (strain DSM 17117 / CIP 110805 / LMG 28347 / Deep ecotype).